The following is a 341-amino-acid chain: L-threonine 3-dehydrogenase (341 aa).

Cys38 is a binding site for Zn(2+). Residues Thr40 and His43 each act as charge relay system in the active site. Zn(2+) contacts are provided by His63, Glu64, Cys93, Cys96, Cys99, and Cys107. NAD(+) contacts are provided by residues Ile175, Asp195, Arg200, 262 to 264, and 286 to 287; these read LGI and IY.

Belongs to the zinc-containing alcohol dehydrogenase family. As to quaternary structure, homotetramer. The cofactor is Zn(2+).

The protein localises to the cytoplasm. It catalyses the reaction L-threonine + NAD(+) = (2S)-2-amino-3-oxobutanoate + NADH + H(+). Its pathway is amino-acid degradation; L-threonine degradation via oxydo-reductase pathway; glycine from L-threonine: step 1/2. Catalyzes the NAD(+)-dependent oxidation of L-threonine to 2-amino-3-ketobutyrate. The sequence is that of L-threonine 3-dehydrogenase from Yersinia enterocolitica serotype O:8 / biotype 1B (strain NCTC 13174 / 8081).